We begin with the raw amino-acid sequence, 164 residues long: Transcriptional regulator MraZ (164 aa).

SpoVT-AbrB domains are found at residues 7-57 (THQN…TVGA) and 86-129 (AYPL…NPEA). The segment at 133 to 164 (RRQAARSRARTLATSRRPASAPAAGNTAGAAE) is disordered. Positions 142–164 (RTLATSRRPASAPAAGNTAGAAE) are enriched in low complexity.

The protein belongs to the MraZ family. In terms of assembly, forms oligomers.

The protein resides in the cytoplasm. It localises to the nucleoid. This chain is Transcriptional regulator MraZ, found in Gluconobacter oxydans (strain 621H) (Gluconobacter suboxydans).